Here is a 500-residue protein sequence, read N- to C-terminus: Cytochrome P450 monooxygenase ausR (500 aa).

The chain crosses the membrane as a helical span at residues 15-35; that stretch reads GVGLYILWTVAVLFVIFKLLA. Cys439 lines the heme pocket.

Belongs to the cytochrome P450 family. The cofactor is heme.

The protein localises to the membrane. Its pathway is secondary metabolite biosynthesis; terpenoid biosynthesis. Its function is as follows. Cytochrome P450 monooxygenase; part of the gene cluster that mediates the biosynthesis of calidodehydroaustin, a fungal meroterpenoid. The first step of the pathway is the synthesis of 3,5-dimethylorsellinic acid by the polyketide synthase ausA. 3,5-dimethylorsellinic acid is then prenylated by the polyprenyl transferase ausN. Further epoxidation by the FAD-dependent monooxygenase ausM and cyclization by the probable terpene cyclase ausL lead to the formation of protoaustinoid A. Protoaustinoid A is then oxidized to spiro-lactone preaustinoid A3 by the combined action of the FAD-binding monooxygenases ausB and ausC, and the dioxygenase ausE. Acid-catalyzed keto-rearrangement and ring contraction of the tetraketide portion of preaustinoid A3 by ausJ lead to the formation of preaustinoid A4. The aldo-keto reductase ausK, with the help of ausH, is involved in the next step by transforming preaustinoid A4 into isoaustinone which is in turn hydroxylated by the P450 monooxygenase ausI to form austinolide. The cytochrome P450 monooxygenase ausG modifies austinolide to austinol. Austinol is further acetylated to austin by the O-acetyltransferase ausP, which spontaneously changes to dehydroaustin. The cytochrome P450 monooxygenase ausR then converts dehydroaustin is into 7-dehydrodehydroaustin. The hydroxylation catalyzed by ausR permits the O-acetyltransferase ausQ to add an additional acetyl group to the molecule, leading to the formation of acetoxydehydroaustin. The short chain dehydrogenase ausT catalyzes the reduction of the double bond present between carbon atoms 1 and 2 to convert 7-dehydrodehydroaustin into 1,2-dihydro-7-hydroxydehydroaustin. AusQ catalyzes not only an acetylation reaction but also the addition of the PKS ausV diketide product to 1,2-dihydro-7-hydroxydehydroaustin, forming precalidodehydroaustin. Finally, the iron/alpha-ketoglutarate-dependent dioxygenase converts precalidodehydroaustin into calidodehydroaustin. This Aspergillus calidoustus protein is Cytochrome P450 monooxygenase ausR.